A 216-amino-acid polypeptide reads, in one-letter code: ATP-dependent dethiobiotin synthetase BioD (216 aa).

12-17 lines the ATP pocket; sequence GVGKSY. Ser16 is a binding site for Mg(2+). Lys37 is an active-site residue. Thr41 contributes to the substrate binding site. The Mg(2+) site is built by His53 and Glu115. Residue 115 to 118 participates in ATP binding; sequence EGAG.

The protein belongs to the dethiobiotin synthetase family. Homodimer. Mg(2+) serves as cofactor.

It is found in the cytoplasm. It catalyses the reaction (7R,8S)-7,8-diammoniononanoate + CO2 + ATP = (4R,5S)-dethiobiotin + ADP + phosphate + 3 H(+). It functions in the pathway cofactor biosynthesis; biotin biosynthesis; biotin from 7,8-diaminononanoate: step 1/2. Functionally, catalyzes a mechanistically unusual reaction, the ATP-dependent insertion of CO2 between the N7 and N8 nitrogen atoms of 7,8-diaminopelargonic acid (DAPA, also called 7,8-diammoniononanoate) to form a ureido ring. The polypeptide is ATP-dependent dethiobiotin synthetase BioD (Wolinella succinogenes (strain ATCC 29543 / DSM 1740 / CCUG 13145 / JCM 31913 / LMG 7466 / NCTC 11488 / FDC 602W) (Vibrio succinogenes)).